The following is a 197-amino-acid chain: Imidazoleglycerol-phosphate dehydratase (197 aa).

The protein belongs to the imidazoleglycerol-phosphate dehydratase family.

The protein localises to the cytoplasm. It carries out the reaction D-erythro-1-(imidazol-4-yl)glycerol 3-phosphate = 3-(imidazol-4-yl)-2-oxopropyl phosphate + H2O. It participates in amino-acid biosynthesis; L-histidine biosynthesis; L-histidine from 5-phospho-alpha-D-ribose 1-diphosphate: step 6/9. This is Imidazoleglycerol-phosphate dehydratase from Thioalkalivibrio sulfidiphilus (strain HL-EbGR7).